The primary structure comprises 469 residues: UDP-N-acetylmuramoylalanine--D-glutamate ligase (469 aa).

121–127 (GTNGKST) contacts ATP.

Belongs to the MurCDEF family.

The protein resides in the cytoplasm. The catalysed reaction is UDP-N-acetyl-alpha-D-muramoyl-L-alanine + D-glutamate + ATP = UDP-N-acetyl-alpha-D-muramoyl-L-alanyl-D-glutamate + ADP + phosphate + H(+). Its pathway is cell wall biogenesis; peptidoglycan biosynthesis. In terms of biological role, cell wall formation. Catalyzes the addition of glutamate to the nucleotide precursor UDP-N-acetylmuramoyl-L-alanine (UMA). The polypeptide is UDP-N-acetylmuramoylalanine--D-glutamate ligase (Rhodopseudomonas palustris (strain ATCC BAA-98 / CGA009)).